Reading from the N-terminus, the 161-residue chain is Vitamin K epoxide reductase complex subunit 1 (161 aa).

Residues 1–9 (MGTTWRSPG) are Cytoplasmic-facing. A helical membrane pass occupies residues 10–29 (RLRLALCLAGLALSLYALHV). The Lumenal segment spans residues 30–80 (KAARARNEDYRALCDVGTAISCSRVFSSRWGRGFGLVEHVLGADSILNQSN). A disulfide bond links C43 and C51. (S)-warfarin is bound at residue N80. The chain crosses the membrane as a helical span at residues 81-95 (SIFGCMFYTIQLLLG). Residues 96–100 (CLRGR) lie on the Cytoplasmic side of the membrane. Residues 101-128 (WASILLILSSLVSVAGSLYLAWILFFVL) form a helical membrane-spanning segment. The Lumenal portion of the chain corresponds to 129–131 (YDF). The cysteines at positions 132 and 135 are disulfide-linked. The helical transmembrane segment at 132 to 153 (CIVCITTYAINAGLMLLSFQKV) threads the bilayer. Phylloquinone-binding residues include C135 and Y139. Y139 contacts (S)-warfarin. Over 154–161 (PEHKVKKP) the chain is Cytoplasmic.

The protein belongs to the VKOR family. In terms of tissue distribution, highly expressed in liver. Detected at lower levels in lung, kidney and testis.

The protein resides in the endoplasmic reticulum membrane. The enzyme catalyses phylloquinone + [protein]-disulfide + H2O = 2,3-epoxyphylloquinone + [protein]-dithiol. It carries out the reaction phylloquinol + [protein]-disulfide = phylloquinone + [protein]-dithiol. Inhibited by warfarin (coumadin). Warfarin locks VKORC1 in both redox states into the closed conformation. Functionally, involved in vitamin K metabolism. Catalytic subunit of the vitamin K epoxide reductase (VKOR) complex which reduces inactive vitamin K 2,3-epoxide to active vitamin K. Vitamin K is required for the gamma-carboxylation of various proteins, including clotting factors, and is required for normal blood coagulation, but also for normal bone development. The sequence is that of Vitamin K epoxide reductase complex subunit 1 (Vkorc1) from Rattus norvegicus (Rat).